Consider the following 256-residue polypeptide: MSKQSVAQVRALLSSITDPQDPRLAEFKDDPRKGVQAALNQFAKRLEKRAEARAAFLNRFRYENQLWQAGHQYVAGIDEVGRGPLAGPVVTCAVVLDSQFDLVGVTDSKQLSRHEREQLYLRILDEAVEVSLAVSPAQEIDRLNIYAATQTAMIRSVKALHHQPSHLIVDAVPLDIPVPQTTLIKGDQKSISVAAASIVAKEYRDHLMAIYDRLYPGYGFKDNMGYGTAAHLAGLEQLGACPIHRRTFRPVPDYVN.

The 185-residue stretch at 72–256 (QYVAGIDEVG…TFRPVPDYVN (185 aa)) folds into the RNase H type-2 domain. 3 residues coordinate a divalent metal cation: Asp-78, Glu-79, and Asp-170.

The protein belongs to the RNase HII family. The cofactor is Mn(2+). Mg(2+) is required as a cofactor.

It localises to the cytoplasm. It catalyses the reaction Endonucleolytic cleavage to 5'-phosphomonoester.. Its function is as follows. Endonuclease that specifically degrades the RNA of RNA-DNA hybrids. This is Ribonuclease HII from Limosilactobacillus fermentum (strain NBRC 3956 / LMG 18251) (Lactobacillus fermentum).